We begin with the raw amino-acid sequence, 453 residues long: Ribosomal protein uS12 methylthiotransferase RimO (453 aa).

An MTTase N-terminal domain is found at P5 to P120. Residues C14, C50, C79, C151, C155, and C158 each contribute to the [4Fe-4S] cluster site. The region spanning L137–N382 is the Radical SAM core domain. Positions Q385–V453 constitute a TRAM domain.

Belongs to the methylthiotransferase family. RimO subfamily. [4Fe-4S] cluster serves as cofactor.

It is found in the cytoplasm. It catalyses the reaction L-aspartate(89)-[ribosomal protein uS12]-hydrogen + (sulfur carrier)-SH + AH2 + 2 S-adenosyl-L-methionine = 3-methylsulfanyl-L-aspartate(89)-[ribosomal protein uS12]-hydrogen + (sulfur carrier)-H + 5'-deoxyadenosine + L-methionine + A + S-adenosyl-L-homocysteine + 2 H(+). In terms of biological role, catalyzes the methylthiolation of an aspartic acid residue of ribosomal protein uS12. In Burkholderia orbicola (strain MC0-3), this protein is Ribosomal protein uS12 methylthiotransferase RimO.